Reading from the N-terminus, the 819-residue chain is Metabotropic glutamate receptor-like protein O (819 aa).

An N-terminal signal peptide occupies residues 1–19 (MKKVFFLILILNCVVGALS). The Extracellular segment spans residues 20–394 (NKNICKISLL…FVDSYSNSIK (375 aa)). 6 N-linked (GlcNAc...) asparagine glycosylation sites follow: asparagine 99, asparagine 185, asparagine 277, asparagine 295, asparagine 330, and asparagine 370. The helical transmembrane segment at 395 to 415 (ISILSVSIFCIFICVLGMIFI) threads the bilayer. At 416–428 (TVLRNARILKSSS) the chain is on the cytoplasmic side. The chain crosses the membrane as a helical span at residues 429 to 449 (PSFLLLILFGCIVIFTGCILF). The Extracellular segment spans residues 450–457 (SQPATDKT). The helical transmembrane segment at 458-478 (CQGRVWLLSIGYTIFLGSLLI) threads the bilayer. The Cytoplasmic segment spans residues 479–503 (KNWRVWLLFDNKKLRKRSITNWKLY). Residues 504–524 (PWVAGILVVDVLILALWQGLG) form a helical membrane-spanning segment. The Extracellular segment spans residues 525–550 (DIKSESRIIGTSFYQYTNVCTNNDQG). Residues 551 to 571 (SIALYILLAFHGLKLLGTCFI) form a helical membrane-spanning segment. At 572 to 587 (SFKIKLVDIEEFNESK) the chain is on the cytoplasmic side. The chain crosses the membrane as a helical span at residues 588 to 608 (PITTSVFIILFCIFTIILLIA). Residues 609-624 (PSSSSSSASSPQPIAS) are Extracellular-facing. Residues 625–645 (LETIICICSVTTTAISIGLLF) traverse the membrane as a helical segment. Topologically, residues 646 to 819 (GDKIYFITTQ…NNENEIISDT (174 aa)) are cytoplasmic. Residues 674-819 (KDCDDDDDDS…NNENEIISDT (146 aa)) are disordered. Residues 695–712 (NKNKNKNRNQSEKKKRPN) are compositionally biased toward basic residues. Over residues 726 to 739 (ESVVFNPPSNNDLT) the composition is skewed to polar residues. Basic and acidic residues predominate over residues 748–768 (GIKEGHGHDSENNDEYEHHED). Positions 769–798 (EDHEYEGEGEDEDHEDEYEVENDIEQEQEQ) are enriched in acidic residues. Residues 799–808 (ESSNISISTK) are compositionally biased toward low complexity.

This sequence in the N-terminal section; belongs to the BMP lipoprotein family. It in the C-terminal section; belongs to the G-protein coupled receptor 3 family. GABA-B receptor subfamily.

It localises to the membrane. This Dictyostelium discoideum (Social amoeba) protein is Metabotropic glutamate receptor-like protein O (grlO).